The primary structure comprises 321 residues: Acyl-CoA 5-desaturase AL21 (321 aa).

Transmembrane regions (helical) follow at residues 42–62 (IFHI…PFTF) and 64–84 (WSAF…GTTL). Residues His-87, His-92, His-124, His-127, and His-128 each coordinate Fe cation. The Histidine box-1 motif lies at 87–92 (HRNLTH). The Histidine box-2 motif lies at 124 to 128 (HRYHH). A helical transmembrane segment spans residues 190-210 (LQAALLYMFGGFPFIVWGMAV). Fe cation is bound by residues His-227, His-256, His-259, and His-260. Positions 256–260 (HNNHH) match the Histidine box-3 motif.

It belongs to the fatty acid desaturase type 1 family. It depends on Fe(2+) as a cofactor.

The protein resides in the membrane. It catalyses the reaction (11Z,14Z)-eicosadienoyl-CoA + AH2 + O2 = (5Z,11Z,14Z)-eicosatrienoyl-CoA + A + 2 H2O. The catalysed reaction is (11Z,14Z,17Z)-eicosatrienoyl-CoA + AH2 + O2 = (5Z,11Z,14Z,17Z)-eicosatetraenoyl-CoA + A + 2 H2O. It participates in lipid metabolism; polyunsaturated fatty acid biosynthesis. Functionally, catalyzes the desaturation of 20:2Delta(11,14) and 20:3Delta(11,14,17) to generate sciadonic acid (20:3Delta(5,11,14)) and juniperonic acid (20:4Delta(5,11,14,17)). The enzyme can also use 16:0 and 18:0 as substrates. The polypeptide is Acyl-CoA 5-desaturase AL21 (Anemone leveillei (Windflower)).